Here is a 589-residue protein sequence, read N- to C-terminus: Putative phospholipase B-like 2 (589 aa).

Residues 1 to 41 (MVAPMYGSPGGRLARAVTRALALALVLALLVGLFLSGLTGA) form the signal peptide. N88 and N110 each carry an N-linked (GlcNAc...) asparagine glycan. A disulfide bridge links C142 with C152. N174, N231, N436, and N465 each carry an N-linked (GlcNAc...) asparagine glycan. C492 and C495 are joined by a disulfide. N515 is a glycosylation site (N-linked (GlcNAc...) asparagine).

The protein belongs to the phospholipase B-like family. As to quaternary structure, interacts with IGF2R. Post-translationally, glycosylated; contains mannose 6-phosphate sugars.

It is found in the lysosome lumen. Its function is as follows. Putative phospholipase. The chain is Putative phospholipase B-like 2 (PLBD2) from Bos taurus (Bovine).